The chain runs to 585 residues: YTH domain-containing family protein 3 (585 aa).

3 disordered regions span residues 1–52 (MSAT…YPPM), 243–277 (RKPA…MNIG), and 304–351 (PQPL…QQLQ). Serine 2 is subject to N-acetylserine. The span at 15-24 (NKVSVQNGSI) shows a compositional bias: polar residues. Serine 23 is modified (phosphoserine). Positions 244-254 (KPAKPQPKLKP) are enriched in basic residues. Over residues 329–351 (QQQQGPQPQAQPHQVQPQQQQLQ) the composition is skewed to low complexity. Residues 416–550 (GRVFIIKSYS…EKAKQVLKII (135 aa)) enclose the YTH domain. RNA is bound by residues 422-424 (KSY), aspartate 428, 438-439 (WC), asparagine 468, tryptophan 492, and tryptophan 497.

It belongs to the YTHDF family. YTHDF3 subfamily. As to quaternary structure, interacts with CNOT1; promoting recruitment of the CCR4-NOT complex. Interacts with YTHDF1. Interacts with YTHDF2. Interacts with PAN3. In terms of processing, (Microbial infection) Proteolytically cleaved by HIV-1 protease when incorporated into HIV-1 particles in a nucleocapsid-dependent-manner. Cleavage by HIV-1 protease probably ensures optimal infectivity of the mature virion.

Its subcellular location is the cytoplasm. The protein localises to the cytosol. It is found in the P-body. The protein resides in the stress granule. In terms of biological role, specifically recognizes and binds N6-methyladenosine (m6A)-containing RNAs, and regulates their stability. M6A is a modification present at internal sites of mRNAs and some non-coding RNAs and plays a role in mRNA stability and processing. Acts as a regulator of mRNA stability by promoting degradation of m6A-containing mRNAs via interaction with the CCR4-NOT complex or PAN3. The YTHDF paralogs (YTHDF1, YTHDF2 and YTHDF3) share m6A-containing mRNAs targets and act redundantly to mediate mRNA degradation and cellular differentiation. Acts as a negative regulator of type I interferon response by down-regulating interferon-stimulated genes (ISGs) expression: acts by binding to FOXO3 mRNAs. Binds to FOXO3 mRNAs independently of METTL3-mediated m6A modification. Can also act as a regulator of mRNA stability in cooperation with YTHDF2 by binding to m6A-containing mRNA and promoting their degradation. Recognizes and binds m6A-containing circular RNAs (circRNAs); circRNAs are generated through back-splicing of pre-mRNAs, a non-canonical splicing process promoted by dsRNA structures across circularizing exons. Promotes formation of phase-separated membraneless compartments, such as P-bodies or stress granules, by undergoing liquid-liquid phase separation upon binding to mRNAs containing multiple m6A-modified residues: polymethylated mRNAs act as a multivalent scaffold for the binding of YTHDF proteins, juxtaposing their disordered regions and thereby leading to phase separation. The resulting mRNA-YTHDF complexes then partition into different endogenous phase-separated membraneless compartments, such as P-bodies, stress granules or neuronal RNA granules. May also recognize and bind N1-methyladenosine (m1A)-containing mRNAs: inhibits trophoblast invasion by binding to m1A-methylated transcripts of IGF1R, promoting their degradation. Its function is as follows. Has some antiviral activity against HIV-1 virus: incorporated into HIV-1 particles in a nucleocapsid-dependent manner and reduces viral infectivity in the next cycle of infection. May interfere with this early step of the viral life cycle by binding to N6-methyladenosine (m6A) modified sites on the HIV-1 RNA genome. This chain is YTH domain-containing family protein 3, found in Homo sapiens (Human).